The following is a 648-amino-acid chain: Biosynthetic arginine decarboxylase (648 aa).

Lysine 109 bears the N6-(pyridoxal phosphate)lysine mark. Residue 291 to 301 (IDVGGGLGIDF) coordinates substrate.

It belongs to the Orn/Lys/Arg decarboxylase class-II family. SpeA subfamily. Requires Mg(2+) as cofactor. Pyridoxal 5'-phosphate is required as a cofactor.

The enzyme catalyses L-arginine + H(+) = agmatine + CO2. In terms of biological role, catalyzes the biosynthesis of agmatine from arginine. This Prochlorococcus marinus subsp. pastoris (strain CCMP1986 / NIES-2087 / MED4) protein is Biosynthetic arginine decarboxylase.